Reading from the N-terminus, the 209-residue chain is MTGSSPNILILGIGNLLWADEGFGVRCVELLNERYRFPDGVRLMDGGTQGIYLVQHVQQADCLIVFDAVDYGLAPGTLKVVRDDEVPRFMGAKRMSLHQTGFQDVLALAAFTGAYPRELLLVGVQPAELEDFGGSLREPVRAQLEPALAIALAFLAERGVLATPREGDAEQLAPAQLALGRYEAERPAEELAYRHGDIRFIAQPGREDD.

Residues glutamate 21, aspartate 67, and histidine 98 each contribute to the Ni(2+) site.

Belongs to the peptidase A31 family.

Not known. Could be involved in the processing of hydrogenase. The sequence is that of Hydrogenase expression/formation protein HupM (hupM) from Azotobacter chroococcum mcd 1.